Consider the following 90-residue polypeptide: Cluster 41 protein AFLA_114800 (90 aa).

Residues 55–77 form a helical membrane-spanning segment; sequence GLLLLCCFYPIGNLILLVRLSLV. The N-linked (GlcNAc...) asparagine glycan is linked to asparagine 80.

The protein localises to the membrane. Cluster 41 protein; part of the gene cluster 41 that mediates the biosynthesis of an extracellular and diffusible metabolite that is able to stimulate colony sclerotial production. The protein is Cluster 41 protein AFLA_114800 of Aspergillus flavus (strain ATCC 200026 / FGSC A1120 / IAM 13836 / NRRL 3357 / JCM 12722 / SRRC 167).